A 406-amino-acid polypeptide reads, in one-letter code: MDQNGMEIPVTLIIKAPNQKYSDQTISCFLNWTVGKLKTHLSNVYPSKPLTKDQRLVYSGRLLPDHLQLKDILRKQDEYHMVHLVCTSRTPPSSPKSSTNRESHEALASNSNSSSDQSGSSTPSSSQETLTLATSSSSEGLRQRTLPQAQTDPAQSHQVPYVMQGNVDNQLPGQAVPAGFPVYPAFNPLQMLWWQQMYAHQYYMQYQAAVSAQATSNANPAQPAATQPLNLAHVPGEEPPPAPNLVAQENRPMNENVQMNAQGGPVLNEEDFNRDWLDWMYTFSRAAILLSIVYFYSSFSRFIMVMGAMLLVYLHQAGWFPFRQEGVQHQAPNNNAEVNNDVQNANNLELEEMERLMDDGLEDESGEDAGEDASAIQRPGLMASAWSFITTFFTSLIPEGPPQVAN.

One can recognise a Ubiquitin-like domain in the interval 10 to 89 (VTLIIKAPNQ…HMVHLVCTSR (80 aa)). Residues 86 to 156 (CTSRTPPSSP…PQAQTDPAQS (71 aa)) form a disordered region. Low complexity-rich tracts occupy residues 87 to 98 (TSRTPPSSPKSS) and 109 to 139 (SNSN…SSSE). Positions 145 to 156 (TLPQAQTDPAQS) are enriched in polar residues. Residues 302–322 (FIMVMGAMLLVYLHQAGWFPF) form a helical membrane-spanning segment.

It is found in the membrane. In terms of biological role, could be involved in the unfolded protein response (UPR) pathway. This Bos taurus (Bovine) protein is Homocysteine-responsive endoplasmic reticulum-resident ubiquitin-like domain member 2 protein (HERPUD2).